The sequence spans 189 residues: GTPase NRas (189 aa).

10-17 (GAGGVGKS) is a GTP binding site. The Effector region signature appears at 32-40 (YDPTIEDSY). Residues 57–61 (DTAGQ) and 116–119 (NKCD) contribute to the GTP site. Positions 166–185 (YRMKKLDSSEDNNQGCIRIP) are hypervariable region. Cysteine 181 carries S-palmitoyl cysteine lipidation. Cysteine 186 is lipidated: S-farnesyl cysteine. A propeptide spans 187-189 (KLM) (removed in mature form).

The protein belongs to the small GTPase superfamily. Ras family. Palmitoylated by the ZDHHC9-GOLGA7 complex. Depalmitoylated by abhd17a, abhd17b and abhd17c. A continuous cycle of de- and re-palmitoylation regulates rapid exchange between plasma membrane and Golgi.

The protein resides in the cell membrane. It is found in the golgi apparatus membrane. The enzyme catalyses GTP + H2O = GDP + phosphate + H(+). Alternates between an inactive form bound to GDP and an active form bound to GTP. Activated by a guanine nucleotide-exchange factor (GEF) and inactivated by a GTPase-activating protein (GAP). Functionally, ras proteins bind GDP/GTP and possess intrinsic GTPase activity. This chain is GTPase NRas (nras), found in Xenopus laevis (African clawed frog).